The following is a 508-amino-acid chain: ATP synthase subunit alpha, mitochondrial (508 aa).

Residue 171-178 coordinates ATP; that stretch reads GDRQTGKT.

Belongs to the ATPase alpha/beta chains family. In terms of assembly, F-type ATPases have 2 components, CF(1) - the catalytic core - and CF(0) - the membrane proton channel. CF(1) has five subunits: alpha(3), beta(3), gamma(1), delta(1), epsilon(1). CF(0) has three main subunits: a, b and c.

It is found in the mitochondrion. The protein localises to the mitochondrion inner membrane. In terms of biological role, mitochondrial membrane ATP synthase (F(1)F(0) ATP synthase or Complex V) produces ATP from ADP in the presence of a proton gradient across the membrane which is generated by electron transport complexes of the respiratory chain. F-type ATPases consist of two structural domains, F(1) - containing the extramembraneous catalytic core, and F(0) - containing the membrane proton channel, linked together by a central stalk and a peripheral stalk. During catalysis, ATP synthesis in the catalytic domain of F(1) is coupled via a rotary mechanism of the central stalk subunits to proton translocation. Subunits alpha and beta form the catalytic core in F(1). Rotation of the central stalk against the surrounding alpha(3)beta(3) subunits leads to hydrolysis of ATP in three separate catalytic sites on the beta subunits. Subunit alpha does not bear the catalytic high-affinity ATP-binding sites. This is ATP synthase subunit alpha, mitochondrial (ATPA) from Zea mays (Maize).